Here is a 224-residue protein sequence, read N- to C-terminus: Ribosomal RNA small subunit methyltransferase G (224 aa).

S-adenosyl-L-methionine contacts are provided by residues G92, L97, 143 to 144 (VE), and R156.

It belongs to the methyltransferase superfamily. RNA methyltransferase RsmG family.

It localises to the cytoplasm. The catalysed reaction is guanosine(527) in 16S rRNA + S-adenosyl-L-methionine = N(7)-methylguanosine(527) in 16S rRNA + S-adenosyl-L-homocysteine. Functionally, specifically methylates the N7 position of guanine in position 527 of 16S rRNA. This chain is Ribosomal RNA small subunit methyltransferase G, found in Albidiferax ferrireducens (strain ATCC BAA-621 / DSM 15236 / T118) (Rhodoferax ferrireducens).